The following is a 127-amino-acid chain: Large ribosomal subunit protein bL20 (127 aa).

The protein belongs to the bacterial ribosomal protein bL20 family.

Binds directly to 23S ribosomal RNA and is necessary for the in vitro assembly process of the 50S ribosomal subunit. It is not involved in the protein synthesizing functions of that subunit. This Mycoplasma pneumoniae (strain ATCC 29342 / M129 / Subtype 1) (Mycoplasmoides pneumoniae) protein is Large ribosomal subunit protein bL20 (rplT).